The chain runs to 336 residues: Glutamyl endopeptidase (336 aa).

The first 29 residues, 1-29, serve as a signal peptide directing secretion; the sequence is MKGKFLKVSSLFVATLTTATLVSSPAANA. A propeptide spanning residues 30-68 is cleaved from the precursor; the sequence is LSSKAMDNHPQQTQSSKQQTPKIQKGGNLKPLEQREHAN. Residues 34–61 form a disordered region; it reads AMDNHPQQTQSSKQQTPKIQKGGNLKPL. A compositionally biased stretch (low complexity) spans 39–51; that stretch reads PQQTQSSKQQTPK. Residues H119, D161, and S237 each act as charge relay system in the active site. The segment at 283-336 is disordered; the sequence is FANDDQPNNPDNPDNPNNPDNPNNPDEPNNPDNPNNPDNPDNGDNNNSDNPDAA. The span at 286–336 shows a compositional bias: low complexity; that stretch reads DDQPNNPDNPDNPNNPDNPNNPDEPNNPDNPNNPDNPDNGDNNNSDNPDAA. 11 tandem repeats follow at residues 289–291, 292–294, 295–297, 298–300, 301–303, 304–306, 310–312, 313–315, 316–318, 319–321, and 322–324. The segment at 289–324 is 11 X 3 AA repeats of P-[DN]-N; it reads PNNPDNPDNPNNPDNPNNPDEPNNPDNPNNPDNPDN.

The protein belongs to the peptidase S1B family. Proteolytically cleaved by aureolysin (aur). This cleavage leads to the activation of SspA.

It localises to the secreted. The catalysed reaction is Preferential cleavage: Glu-|-Xaa, Asp-|-Xaa.. Its function is as follows. Preferentially cleaves peptide bonds on the carboxyl-terminal side of aspartate and glutamate. Along with other extracellular proteases it is involved in colonization and infection of human tissues. Required for proteolytic maturation of thiol protease SspB and inactivation of SspC, an inhibitor of SspB. It is the most important protease for degradation of fibronectin-binding protein (FnBP) and surface protein A, which are involved in adherence to host cells. May also protect bacteria against host defense mechanism by cleaving the immunoglobulin classes IgG, IgA and IgM. May be involved in the stability of secreted lipases. The protein is Glutamyl endopeptidase (sspA) of Staphylococcus aureus (strain NCTC 8325 / PS 47).